The following is a 308-amino-acid chain: Transmembrane and ubiquitin-like domain-containing protein 1 (308 aa).

Residues V11 to T31 form a helical membrane-spanning segment. Residues T39–S162 are disordered. The segment covering P63–G93 has biased composition (polar residues). Positions S103–V115 are enriched in low complexity. A compositionally biased stretch (polar residues) spans P132 to L149. The region spanning I169–S242 is the Ubiquitin-like domain. 2 helical membrane-spanning segments follow: residues V253–W273 and F283–F303.

The protein resides in the membrane. Its subcellular location is the cytoplasm. It localises to the nucleus. In terms of biological role, may contribute to the regulation of translation during cell-cycle progression. May contribute to the regulation of cell proliferation. The membrane form is involved in sterol-regulated ubiquitination and degradation of HMG-CoA reductase HMGCR. May be involved in centrosome assembly. The protein is Transmembrane and ubiquitin-like domain-containing protein 1 (tmub1) of Xenopus laevis (African clawed frog).